We begin with the raw amino-acid sequence, 135 residues long: Retinol-binding protein 5 (135 aa).

This sequence belongs to the calycin superfamily. Fatty-acid binding protein (FABP) family.

It is found in the cytoplasm. In terms of biological role, intracellular transport of retinol. This is Retinol-binding protein 5 (RBP5) from Pongo abelii (Sumatran orangutan).